We begin with the raw amino-acid sequence, 118 residues long: Fluoride-specific ion channel FluC 2 (118 aa).

4 consecutive transmembrane segments (helical) span residues M1–I21, F33–G53, G55–F75, and I93–M113. Residues G70 and T73 each coordinate Na(+).

Belongs to the fluoride channel Fluc/FEX (TC 1.A.43) family.

It is found in the cell membrane. The enzyme catalyses fluoride(in) = fluoride(out). With respect to regulation, na(+) is not transported, but it plays an essential structural role and its presence is essential for fluoride channel function. Fluoride-specific ion channel. Important for reducing fluoride concentration in the cell, thus reducing its toxicity. This Bacillus cereus (strain ATCC 10987 / NRS 248) protein is Fluoride-specific ion channel FluC 2.